The primary structure comprises 21 residues: SINNTGGSGNRRLDKNGFAGQ.

A disordered region spans residues Ser-1–Gln-21. N-linked (GlcNAc...) asparagine glycosylation occurs at Asn-3.

The protein localises to the secreted. The sequence is that of Dart gland peptide from Cornu aspersum (Brown garden snail).